The sequence spans 640 residues: Asparagine synthetase domain-containing protein 1 (640 aa).

Cys-2 serves as the catalytic For GATase activity. The Glutamine amidotransferase type-2 domain occupies Cys-2–Lys-184. The Asparagine synthetase domain maps to Gln-286–Lys-602.

In Bos taurus (Bovine), this protein is Asparagine synthetase domain-containing protein 1 (ASNSD1).